Reading from the N-terminus, the 253-residue chain is tRNA (guanine-N(7)-)-methyltransferase (253 aa).

Pro residues predominate over residues 1–12 (MSQTPMPQPDQA). Positions 1 to 39 (MSQTPMPQPDQAPPVDVGQPVDEAEAKRRRFKTHGRKKG) are disordered. Residues 27 to 39 (KRRRFKTHGRKKG) show a composition bias toward basic residues. Residues E84, D109, N136, and D159 each contribute to the S-adenosyl-L-methionine site. D159 is a catalytic residue. Residues K163, D195, and 232-235 (TNFE) each bind substrate.

The protein belongs to the class I-like SAM-binding methyltransferase superfamily. TrmB family.

It catalyses the reaction guanosine(46) in tRNA + S-adenosyl-L-methionine = N(7)-methylguanosine(46) in tRNA + S-adenosyl-L-homocysteine. The protein operates within tRNA modification; N(7)-methylguanine-tRNA biosynthesis. Functionally, catalyzes the formation of N(7)-methylguanine at position 46 (m7G46) in tRNA. In Magnetococcus marinus (strain ATCC BAA-1437 / JCM 17883 / MC-1), this protein is tRNA (guanine-N(7)-)-methyltransferase.